The primary structure comprises 302 residues: Coenzyme PQQ synthesis protein B (302 aa).

It belongs to the PqqB family.

It participates in cofactor biosynthesis; pyrroloquinoline quinone biosynthesis. Its function is as follows. May be involved in the transport of PQQ or its precursor to the periplasm. The chain is Coenzyme PQQ synthesis protein B from Azotobacter vinelandii (strain DJ / ATCC BAA-1303).